The sequence spans 204 residues: Casparian strip membrane protein 3 (204 aa).

The Cytoplasmic portion of the chain corresponds to 1-41 (MKNESTFIDVPADSSSAMKGKAPLIGVAKDHTASGSGGYNR). The chain crosses the membrane as a helical span at residues 42–62 (GLSIFDFLLRLAAIVAASVAA). Residues 63–92 (GTMFTSDETLPFFTQFLQFQAGYDDLPTFQ) are Extracellular-facing. A helical transmembrane segment spans residues 93-113 (FFVISMSLVSGYIVLSLPISV). At 114-125 (VTIVRPLAAAPR) the chain is on the cytoplasmic side. Residues 126–146 (LLLLVLDTAVMGLTMAAASSA) traverse the membrane as a helical segment. At 147-204 (AAISYVAHNGNQNTNWLPICQQFGDFCQKTSGGCGLFLCRRRVFHDPGCPLRSRSQRH) the chain is on the extracellular side.

The protein belongs to the Casparian strip membrane proteins (CASP) family. As to quaternary structure, homodimer and heterodimers.

Its subcellular location is the cell membrane. Regulates membrane-cell wall junctions and localized cell wall deposition. Required for establishment of the Casparian strip membrane domain (CSD) and the subsequent formation of Casparian strips, a cell wall modification of the root endodermis that determines an apoplastic barrier between the intraorganismal apoplasm and the extraorganismal apoplasm and prevents lateral diffusion. The protein is Casparian strip membrane protein 3 of Raphanus sativus (Radish).